The chain runs to 154 residues: Ribonuclease H (154 aa).

Residues 1 to 142 enclose the RNase H type-1 domain; the sequence is MLKQITLYTD…CDELARNAAL (142 aa). Residues aspartate 10, glutamate 48, aspartate 70, and aspartate 134 each contribute to the Mg(2+) site.

This sequence belongs to the RNase H family. In terms of assembly, monomer. Mg(2+) serves as cofactor.

The protein localises to the cytoplasm. It carries out the reaction Endonucleolytic cleavage to 5'-phosphomonoester.. Its function is as follows. Endonuclease that specifically degrades the RNA of RNA-DNA hybrids. This chain is Ribonuclease H, found in Tolumonas auensis (strain DSM 9187 / NBRC 110442 / TA 4).